We begin with the raw amino-acid sequence, 406 residues long: MNFPIERVRADFPLLSRQVNGQPLVYLDSAASAQKPQAVIDKELHFYRDGYAAVHRGIHSLSAEATQQMEAVRTQVADFIHAASAEEIIFVRGTTEAINLVANSYGRHFLAAGDSIIITEMEHHANIVPWQMLAQDLGVEIRVWPLTATGELKITALAALIDDTTRLLAVTQVSNVLGTVNPIKDIVAQAKAAGLVVLVDGAQAVMHQPVDVQALGCDFYVFSGHKLYGPSGIGILYGKSALLQQMPPWEGGGAMIKTVSLTQGTTFADAPWRFEAGSPNTAGIMGLGAAIDYVTELGLLPIQQYEQSLMHYALAQLSQIKSLTLYGPTERAGVIAFNLGQHHAYDVGSFLDQYGIAIRTGHHCAMPLMAFYQVPSMCRASLALYNTREDVDRLVAGLQRIEKLLG.

Lys-226 carries the post-translational modification N6-(pyridoxal phosphate)lysine. Catalysis depends on Cys-364, which acts as the Cysteine persulfide intermediate.

It belongs to the class-V pyridoxal-phosphate-dependent aminotransferase family. Csd subfamily. As to quaternary structure, homodimer. Interacts with SufE and the SufBCD complex composed of SufB, SufC and SufD. The interaction with SufE is required to mediate the direct transfer of the sulfur atom from the S-sulfanylcysteine. Pyridoxal 5'-phosphate is required as a cofactor.

The protein localises to the cytoplasm. It carries out the reaction (sulfur carrier)-H + L-cysteine = (sulfur carrier)-SH + L-alanine. The catalysed reaction is L-selenocysteine + AH2 = hydrogenselenide + L-alanine + A + H(+). It participates in cofactor biosynthesis; iron-sulfur cluster biosynthesis. Functionally, cysteine desulfurases mobilize the sulfur from L-cysteine to yield L-alanine, an essential step in sulfur metabolism for biosynthesis of a variety of sulfur-containing biomolecules. Component of the suf operon, which is activated and required under specific conditions such as oxidative stress and iron limitation. Acts as a potent selenocysteine lyase in vitro, that mobilizes selenium from L-selenocysteine. Selenocysteine lyase activity is however unsure in vivo. In Yersinia pseudotuberculosis serotype IB (strain PB1/+), this protein is Cysteine desulfurase.